A 48-amino-acid chain; its full sequence is Large ribosomal subunit protein bL33B (48 aa).

It belongs to the bacterial ribosomal protein bL33 family.

The sequence is that of Large ribosomal subunit protein bL33B (rpmG2) from Mycoplasma pneumoniae (strain ATCC 29342 / M129 / Subtype 1) (Mycoplasmoides pneumoniae).